Reading from the N-terminus, the 282-residue chain is Bifunctional protein FolD (282 aa).

NADP(+) is bound by residues 165 to 167 (NRS), serine 190, and isoleucine 231.

It belongs to the tetrahydrofolate dehydrogenase/cyclohydrolase family. Homodimer.

It catalyses the reaction (6R)-5,10-methylene-5,6,7,8-tetrahydrofolate + NADP(+) = (6R)-5,10-methenyltetrahydrofolate + NADPH. The catalysed reaction is (6R)-5,10-methenyltetrahydrofolate + H2O = (6R)-10-formyltetrahydrofolate + H(+). It functions in the pathway one-carbon metabolism; tetrahydrofolate interconversion. Functionally, catalyzes the oxidation of 5,10-methylenetetrahydrofolate to 5,10-methenyltetrahydrofolate and then the hydrolysis of 5,10-methenyltetrahydrofolate to 10-formyltetrahydrofolate. This Clostridium botulinum (strain ATCC 19397 / Type A) protein is Bifunctional protein FolD.